The sequence spans 111 residues: X antigen family member 3 (111 aa).

The disordered stretch occupies residues 1-111; the sequence is MIWRGRSTYR…PEGGDRQPQV (111 aa). The span at 29 to 40 shows a compositional bias: acidic residues; the sequence is PGDEEPQQEEPP. The segment covering 97 to 111 has biased composition (basic and acidic residues); that stretch reads EQFKMPEGGDRQPQV.

The protein belongs to the GAGE family.

This is X antigen family member 3 (XAGE3) from Homo sapiens (Human).